The primary structure comprises 204 residues: Fluoride-specific ion channel FluC 3 (204 aa).

Over residues 1–16 (MRADESGPERESREPT) the composition is skewed to basic and acidic residues. The segment at 1–53 (MRADESGPERESREPTHIPGAEPELGGEPTPRGEPGPGFEPGPGGEPAPSRAP) is disordered. Over residues 32–46 (RGEPGPGFEPGPGGE) the composition is skewed to pro residues. 4 helical membrane passes run 62–82 (VLAAVALGGVLGGSARYALGL), 96–116 (FAVNVSGAFLLALLLVYVLEI), 125–145 (PFAAVGFLGSFTTFSTWMVDT), and 158–178 (AFNVFGSLFAGLAATGLGLAI). Glycine 133 and threonine 136 together coordinate Na(+).

This sequence belongs to the fluoride channel Fluc/FEX (TC 1.A.43) family.

It localises to the cell membrane. It carries out the reaction fluoride(in) = fluoride(out). Its activity is regulated as follows. Na(+) is not transported, but it plays an essential structural role and its presence is essential for fluoride channel function. Fluoride-specific ion channel. Important for reducing fluoride concentration in the cell, thus reducing its toxicity. The protein is Fluoride-specific ion channel FluC 3 of Streptomyces avermitilis (strain ATCC 31267 / DSM 46492 / JCM 5070 / NBRC 14893 / NCIMB 12804 / NRRL 8165 / MA-4680).